A 288-amino-acid polypeptide reads, in one-letter code: Lipoyl synthase (288 aa).

[4Fe-4S] cluster contacts are provided by Cys42, Cys47, Cys53, Cys68, Cys72, Cys75, and Ser280. The Radical SAM core domain maps to 54-269 (WGEGTATFMI…EKYGIELGFR (216 aa)).

Belongs to the radical SAM superfamily. Lipoyl synthase family. Requires [4Fe-4S] cluster as cofactor.

It localises to the cytoplasm. It catalyses the reaction [[Fe-S] cluster scaffold protein carrying a second [4Fe-4S](2+) cluster] + N(6)-octanoyl-L-lysyl-[protein] + 2 oxidized [2Fe-2S]-[ferredoxin] + 2 S-adenosyl-L-methionine + 4 H(+) = [[Fe-S] cluster scaffold protein] + N(6)-[(R)-dihydrolipoyl]-L-lysyl-[protein] + 4 Fe(3+) + 2 hydrogen sulfide + 2 5'-deoxyadenosine + 2 L-methionine + 2 reduced [2Fe-2S]-[ferredoxin]. Its pathway is protein modification; protein lipoylation via endogenous pathway; protein N(6)-(lipoyl)lysine from octanoyl-[acyl-carrier-protein]: step 2/2. Functionally, catalyzes the radical-mediated insertion of two sulfur atoms into the C-6 and C-8 positions of the octanoyl moiety bound to the lipoyl domains of lipoate-dependent enzymes, thereby converting the octanoylated domains into lipoylated derivatives. The polypeptide is Lipoyl synthase (Flavobacterium johnsoniae (strain ATCC 17061 / DSM 2064 / JCM 8514 / BCRC 14874 / CCUG 350202 / NBRC 14942 / NCIMB 11054 / UW101) (Cytophaga johnsonae)).